Here is a 182-residue protein sequence, read N- to C-terminus: Small ribosomal subunit protein uS5 (182 aa).

Residues 16 to 79 (FVDRLVHINR…ESAKRGMIYV (64 aa)) form the S5 DRBM domain.

It belongs to the universal ribosomal protein uS5 family. Part of the 30S ribosomal subunit. Contacts proteins S4 and S8.

Functionally, with S4 and S12 plays an important role in translational accuracy. Its function is as follows. Located at the back of the 30S subunit body where it stabilizes the conformation of the head with respect to the body. In Bartonella tribocorum (strain CIP 105476 / IBS 506), this protein is Small ribosomal subunit protein uS5.